Consider the following 1112-residue polypeptide: Electrogenic sodium bicarbonate cotransporter 4 (1112 aa).

Basic and acidic residues predominate over residues M1–E13. Disordered stretches follow at residues M1–G80, K220–T255, and G439–E469. Over M1–S513 the chain is Cytoplasmic. Polar residues-rich tracts occupy residues Q53–D67 and S233–S244. The span at S444 to G465 shows a compositional bias: gly residues. The chain crosses the membrane as a helical span at residues I514–G536. Over D537–E547 the chain is Extracellular. Residues S548–F579 traverse the membrane as a helical segment. Residues E580–R598 are Cytoplasmic-facing. The helical transmembrane segment at L599–I620 threads the bilayer. The Extracellular portion of the chain corresponds to I621–D734. Residues L735–L753 form a helical membrane-spanning segment. Residues K754–D772 lie on the Cytoplasmic side of the membrane. Residues F773–Q792 traverse the membrane as a helical segment. The Extracellular segment spans residues T793–P820. The helical transmembrane segment at W821–F839 threads the bilayer. Residues M840–K858 lie on the Cytoplasmic side of the membrane. The helical transmembrane segment at A859–L875 threads the bilayer. At C876–G880 the chain is on the extracellular side. A helical transmembrane segment spans residues L881–M900. Residues E901 to R920 lie on the Cytoplasmic side of the membrane. A helical transmembrane segment spans residues V921 to L940. The Extracellular portion of the chain corresponds to K941 to M945. A helical transmembrane segment spans residues P946–W966. The Cytoplasmic segment spans residues D967–R992. The chain crosses the membrane as a helical span at residues I993–L1010. Residues K1011–A1015 lie on the Extracellular side of the membrane. The helical transmembrane segment at A1016–L1033 threads the bilayer. At D1034–L1112 the chain is on the cytoplasmic side. The span at K1055–P1074 shows a compositional bias: basic and acidic residues. A disordered region spans residues K1055–L1112.

This sequence belongs to the anion exchanger (TC 2.A.31) family. In terms of tissue distribution, observed in hepatocytes and in the apical region of bile duct intrahepatic cholangiocytes of liver. Also observed in uroepithelium cells lining the outer pelvic wall of the kidney (at protein level). Highly expressed in colon, distal colon, liver, kidney and testis. Moderate expression in duodenum and stomach and weak expression in heart. In kidney, very weakly expressed in the inner medulla, but abundantly expressed in cortex and outer medulla in the medullary thick ascending and cortical thick ascending limbs of the loop of Henle.

It is found in the basolateral cell membrane. Its subcellular location is the apical cell membrane. The enzyme catalyses 2 hydrogencarbonate(out) + Na(+)(out) = 2 hydrogencarbonate(in) + Na(+)(in). The catalysed reaction is 3 hydrogencarbonate(out) + Na(+)(out) = 3 hydrogencarbonate(in) + Na(+)(in). In terms of biological role, mediates sodium- and bicarbonate-dependent electrogenic sodium bicarbonate cotransport, with a Na(+):HCO3(-) stoichiometry varying from 1:2 to 1:3. This chain is Electrogenic sodium bicarbonate cotransporter 4, found in Rattus norvegicus (Rat).